We begin with the raw amino-acid sequence, 946 residues long: Protein TMA108 (946 aa).

Ser2 carries the N-acetylserine modification. Position 293 to 297 (293 to 297) interacts with substrate; the sequence is MAMEN. His330 contributes to the Zn(2+) binding site. The active-site Proton acceptor is the Glu331. Residues His334 and Glu353 each contribute to the Zn(2+) site.

It belongs to the peptidase M1 family. In terms of assembly, associates with ribosomal complexes. Zn(2+) is required as a cofactor.

Its subcellular location is the cytoplasm. Its function is as follows. Putative zinc aminopeptidase which may be involved in ribosome biogenesis. In Saccharomyces cerevisiae (strain ATCC 204508 / S288c) (Baker's yeast), this protein is Protein TMA108 (TMA108).